The sequence spans 253 residues: Tabinhibitin 3 (253 aa).

Residues 1–22 form the signal peptide; the sequence is MTLKRIFCAALALIVLQSVASA. The SCP domain maps to 66-209; it reads LQKTNWLRGV…LKRALFTCNF (144 aa). Positions 222 to 224 match the Cell attachment site motif; the sequence is RGD.

It belongs to the CRISP family. Expressed in salivary glands.

The protein localises to the secreted. Its function is as follows. Inhibits platelet aggregation induced by all agonists tested (ADP, arachidonic acid, the thromboxane A2 analog U46619, thrombin, and snake venom snaclecs (TMVA that activates platelet through GPIB, and stejnulxin that specifically acts through GPVI (GP6))). May act by competing with fibrinogen for binding to glycoprotein IIb/IIIa (ITGA2B/ITGB3). In Tabanus yao (Horsefly), this protein is Tabinhibitin 3.